We begin with the raw amino-acid sequence, 88 residues long: DNA-directed RNA polymerase subunit omega (88 aa).

This sequence belongs to the RNA polymerase subunit omega family. As to quaternary structure, the RNAP catalytic core consists of 2 alpha, 1 beta, 1 beta' and 1 omega subunit. When a sigma factor is associated with the core the holoenzyme is formed, which can initiate transcription.

The enzyme catalyses RNA(n) + a ribonucleoside 5'-triphosphate = RNA(n+1) + diphosphate. Functionally, promotes RNA polymerase assembly. Latches the N- and C-terminal regions of the beta' subunit thereby facilitating its interaction with the beta and alpha subunits. This Thermobifida fusca (strain YX) protein is DNA-directed RNA polymerase subunit omega.